We begin with the raw amino-acid sequence, 289 residues long: ATP synthase gamma chain (289 aa).

Belongs to the ATPase gamma chain family. As to quaternary structure, F-type ATPases have 2 components, CF(1) - the catalytic core - and CF(0) - the membrane proton channel. CF(1) has five subunits: alpha(3), beta(3), gamma(1), delta(1), epsilon(1). CF(0) has three main subunits: a, b and c.

The protein resides in the cell inner membrane. Its function is as follows. Produces ATP from ADP in the presence of a proton gradient across the membrane. The gamma chain is believed to be important in regulating ATPase activity and the flow of protons through the CF(0) complex. The protein is ATP synthase gamma chain of Dichelobacter nodosus (strain VCS1703A).